The sequence spans 206 residues: uncharacterized protein (206 aa).

The N-terminal stretch at 1–18 (MKTYSLLLGLFISFGVLA) is a signal peptide.

This is an uncharacterized protein from Haemophilus influenzae (strain ATCC 51907 / DSM 11121 / KW20 / Rd).